We begin with the raw amino-acid sequence, 212 residues long: MSLFDKKHLVSPADALPGRNTPMPVATLHAVNGHSMTNVPDGMEIAIFAMGCFWGVERLFWQLPGVYSTAAGYTGGYTPNPTYREVCSGDTGHAEAVRIVYDPSVISYEQLLQVFWENHDPAQGMRQGNDHGTQYRSAIYPLTPEQDAAARASLERFQAAMLAADDDRHITTEIANATPFYYAEDDHQQYLHKNPYGYCGIGGIGVCLPPEA.

The active site involves Cys-52.

Belongs to the MsrA Met sulfoxide reductase family.

It carries out the reaction L-methionyl-[protein] + [thioredoxin]-disulfide + H2O = L-methionyl-(S)-S-oxide-[protein] + [thioredoxin]-dithiol. It catalyses the reaction [thioredoxin]-disulfide + L-methionine + H2O = L-methionine (S)-S-oxide + [thioredoxin]-dithiol. Its function is as follows. Has an important function as a repair enzyme for proteins that have been inactivated by oxidation. Catalyzes the reversible oxidation-reduction of methionine sulfoxide in proteins to methionine. The polypeptide is Peptide methionine sulfoxide reductase MsrA (Escherichia coli (strain ATCC 8739 / DSM 1576 / NBRC 3972 / NCIMB 8545 / WDCM 00012 / Crooks)).